The sequence spans 369 residues: MDTDLDVPMQDAVTEQLTPTVSEDMDLNNNSSDNNAEEFSVDDLKPGSSGIADHKSSKPLELNNTNINQLDQWIEHLSKCEPLSEDDVARLCKMAVDVLQFEENVKPINVPVTICGDVHGQFHDLLELFKIGGPCPDTNYLFMGDYVDRGYYSVETVSYLVAMKVRYPHRITILRGNHESRQITQVYGFYDECLRKYGSANVWKMFTDLFDYFPITALVDNKIFCLHGGLSPMIETIDQVRELNRIQEVPHEGPMCDLLWSDPDDRGGWGISPRGAGFTFGQDVSEQFNHTNDLSLIARAHQLVMEGYAWSHQQNVVTIFSAPNYCYRCGNQAAIMEVDENHNRQFLQYDPSVRPGEPSVSRKTPDYFL.

The tract at residues 1 to 57 is disordered; the sequence is MDTDLDVPMQDAVTEQLTPTVSEDMDLNNNSSDNNAEEFSVDDLKPGSSGIADHKSS. Mn(2+)-binding residues include Asp117, His119, Asp145, and Asn177. His178 acts as the Proton donor in catalysis. Positions 227 and 301 each coordinate Mn(2+). The interval 348–369 is disordered; it reads QYDPSVRPGEPSVSRKTPDYFL. Leu369 carries the leucine methyl ester modification.

This sequence belongs to the PPP phosphatase family. PP-2A subfamily. In terms of assembly, inactivated in a complex with phosphatase methylesterase PPE1 (PP2Ai). Interacts with phosphatase 2A activator RRD2, which can reactivate PP2Ai by dissociating the catalytic subunit from the complex. Forms a ternary complex with RRD2-TAP42. It depends on Mn(2+) as a cofactor. Reversibly methyl esterified on Leu-369 by leucine carboxyl methyltransferase 1 (PPM1) and protein phosphatase methylesterase 1 (PPE1). Carboxyl methylation influences the affinity of the catalytic subunit for the different regulatory subunits, thereby modulating the PP2A holoenzyme's substrate specificity, enzyme activity and cellular localization.

It carries out the reaction O-phospho-L-seryl-[protein] + H2O = L-seryl-[protein] + phosphate. The catalysed reaction is O-phospho-L-threonyl-[protein] + H2O = L-threonyl-[protein] + phosphate. Exact function not known, phosphatase 2A performs an essential cellular function. In Saccharomyces cerevisiae (strain ATCC 204508 / S288c) (Baker's yeast), this protein is Serine/threonine-protein phosphatase PP2A-1 catalytic subunit (PPH21).